A 1096-amino-acid chain; its full sequence is Pullulanase (1096 aa).

The first 19 residues, 1–19 (MLRYTCHALFLGSLVLLSG), serve as a signal peptide directing secretion. A lipid anchor (N-palmitoyl cysteine) is attached at cysteine 20. The S-diacylglycerol cysteine moiety is linked to residue cysteine 20. Positions 24–34 (SSSSTSGSPGS) are enriched in low complexity. Positions 24–50 (SSSSTSGSPGSPGNPGNPGTPGTPDPQ) are disordered. The active-site Nucleophile is the aspartate 694. Residue glutamate 723 is the Proton donor of the active site. Residues 1014–1044 (QAGRQSGQPCRRHRGGDQRRAGKPDAAGLRR) are disordered.

This sequence belongs to the glycosyl hydrolase 13 family. As to quaternary structure, homotrimer.

The protein localises to the cell membrane. It carries out the reaction Hydrolysis of (1-&gt;6)-alpha-D-glucosidic linkages in pullulan, amylopectin and glycogen, and in the alpha- and beta-limit dextrins of amylopectin and glycogen.. This chain is Pullulanase (pulA), found in Klebsiella aerogenes (Enterobacter aerogenes).